The primary structure comprises 268 residues: Undecaprenyl-diphosphatase (268 aa).

7 helical membrane-spanning segments follow: residues 5 to 25 (SIIS…IPVS), 43 to 63 (GNTF…LVYF), 84 to 104 (FSVL…HGFI), 107 to 127 (VLFE…IILY), 184 to 204 (AAEF…ALDL), 213 to 233 (FDDV…GIFV), and 248 to 268 (PFAI…WLLG).

This sequence belongs to the UppP family.

Its subcellular location is the cell inner membrane. It catalyses the reaction di-trans,octa-cis-undecaprenyl diphosphate + H2O = di-trans,octa-cis-undecaprenyl phosphate + phosphate + H(+). In terms of biological role, catalyzes the dephosphorylation of undecaprenyl diphosphate (UPP). Confers resistance to bacitracin. The protein is Undecaprenyl-diphosphatase of Rhizobium meliloti (strain 1021) (Ensifer meliloti).